The primary structure comprises 380 residues: Queuine tRNA-ribosyltransferase (380 aa).

The Proton acceptor role is filled by Asp-96. Residues 96–100 (DSGGF), Asp-150, Gln-193, and Gly-220 contribute to the substrate site. Residues 251–257 (GVGAPDS) form an RNA binding region. The active-site Nucleophile is the Asp-270. Residues 275–279 (TRIAR) form an RNA binding; important for wobble base 34 recognition region. Zn(2+)-binding residues include Cys-308, Cys-310, Cys-313, and His-339.

It belongs to the queuine tRNA-ribosyltransferase family. Homodimer. Within each dimer, one monomer is responsible for RNA recognition and catalysis, while the other monomer binds to the replacement base PreQ1. Zn(2+) is required as a cofactor.

The catalysed reaction is 7-aminomethyl-7-carbaguanine + guanosine(34) in tRNA = 7-aminomethyl-7-carbaguanosine(34) in tRNA + guanine. Its pathway is tRNA modification; tRNA-queuosine biosynthesis. Its function is as follows. Catalyzes the base-exchange of a guanine (G) residue with the queuine precursor 7-aminomethyl-7-deazaguanine (PreQ1) at position 34 (anticodon wobble position) in tRNAs with GU(N) anticodons (tRNA-Asp, -Asn, -His and -Tyr). Catalysis occurs through a double-displacement mechanism. The nucleophile active site attacks the C1' of nucleotide 34 to detach the guanine base from the RNA, forming a covalent enzyme-RNA intermediate. The proton acceptor active site deprotonates the incoming PreQ1, allowing a nucleophilic attack on the C1' of the ribose to form the product. After dissociation, two additional enzymatic reactions on the tRNA convert PreQ1 to queuine (Q), resulting in the hypermodified nucleoside queuosine (7-(((4,5-cis-dihydroxy-2-cyclopenten-1-yl)amino)methyl)-7-deazaguanosine). In Streptococcus pneumoniae (strain ATCC BAA-255 / R6), this protein is Queuine tRNA-ribosyltransferase.